Reading from the N-terminus, the 67-residue chain is Non-specific lipid-transfer protein 2P (67 aa).

4 disulfide bridges follow: Cys-2–Cys-34, Cys-10–Cys-24, Cys-25–Cys-60, and Cys-36–Cys-67.

Functionally, transfer lipids across membranes. May play a role in plant defense or in the biosynthesis of cuticle layers. The protein is Non-specific lipid-transfer protein 2P of Triticum aestivum (Wheat).